Consider the following 538-residue polypeptide: Probable ribonuclease 3 (538 aa).

2 consecutive RNase III domains span residues 24–149 (IKSY…LNFG) and 238–381 (ASQM…EGYL). Residues 408 to 477 (LISQNIEVLH…NYKDLILQLY (70 aa)) enclose the DRBM domain.

It belongs to the ribonuclease III family.

It catalyses the reaction Endonucleolytic cleavage to 5'-phosphomonoester.. Digests double-stranded RNA. This chain is Probable ribonuclease 3, found in Acanthamoeba polyphaga (Amoeba).